A 384-amino-acid polypeptide reads, in one-letter code: S-adenosylmethionine synthase (384 aa).

ATP is bound at residue His-15. A Mg(2+)-binding site is contributed by Asp-17. Position 43 (Glu-43) interacts with K(+). L-methionine-binding residues include Glu-56 and Gln-99. The flexible loop stretch occupies residues 99–109 (QSPDINQGVDK). ATP-binding positions include 164–166 (DAK), 230–231 (RF), Asp-239, 245–246 (RK), Ala-262, and Lys-266. Asp-239 lines the L-methionine pocket. Lys-270 lines the L-methionine pocket.

This sequence belongs to the AdoMet synthase family. As to quaternary structure, homotetramer; dimer of dimers. The cofactor is Mg(2+). K(+) serves as cofactor.

Its subcellular location is the cytoplasm. It carries out the reaction L-methionine + ATP + H2O = S-adenosyl-L-methionine + phosphate + diphosphate. Its pathway is amino-acid biosynthesis; S-adenosyl-L-methionine biosynthesis; S-adenosyl-L-methionine from L-methionine: step 1/1. Functionally, catalyzes the formation of S-adenosylmethionine (AdoMet) from methionine and ATP. The overall synthetic reaction is composed of two sequential steps, AdoMet formation and the subsequent tripolyphosphate hydrolysis which occurs prior to release of AdoMet from the enzyme. This Vibrio vulnificus (strain YJ016) protein is S-adenosylmethionine synthase.